An 86-amino-acid polypeptide reads, in one-letter code: Large ribosomal subunit protein bL27 (86 aa).

Belongs to the bacterial ribosomal protein bL27 family.

The protein is Large ribosomal subunit protein bL27 of Xanthomonas oryzae pv. oryzae (strain PXO99A).